A 142-amino-acid polypeptide reads, in one-letter code: 3-hydroxyacyl-[acyl-carrier-protein] dehydratase FabZ (142 aa).

H48 is a catalytic residue.

This sequence belongs to the thioester dehydratase family. FabZ subfamily.

It localises to the cytoplasm. It carries out the reaction a (3R)-hydroxyacyl-[ACP] = a (2E)-enoyl-[ACP] + H2O. Its function is as follows. Involved in unsaturated fatty acids biosynthesis. Catalyzes the dehydration of short chain beta-hydroxyacyl-ACPs and long chain saturated and unsaturated beta-hydroxyacyl-ACPs. The polypeptide is 3-hydroxyacyl-[acyl-carrier-protein] dehydratase FabZ (Prochlorococcus marinus (strain MIT 9313)).